Consider the following 254-residue polypeptide: Imidazole glycerol phosphate synthase subunit HisF (254 aa).

Active-site residues include Asp12 and Asp131.

This sequence belongs to the HisA/HisF family. Heterodimer of HisH and HisF.

The protein localises to the cytoplasm. The catalysed reaction is 5-[(5-phospho-1-deoxy-D-ribulos-1-ylimino)methylamino]-1-(5-phospho-beta-D-ribosyl)imidazole-4-carboxamide + L-glutamine = D-erythro-1-(imidazol-4-yl)glycerol 3-phosphate + 5-amino-1-(5-phospho-beta-D-ribosyl)imidazole-4-carboxamide + L-glutamate + H(+). It participates in amino-acid biosynthesis; L-histidine biosynthesis; L-histidine from 5-phospho-alpha-D-ribose 1-diphosphate: step 5/9. Its function is as follows. IGPS catalyzes the conversion of PRFAR and glutamine to IGP, AICAR and glutamate. The HisF subunit catalyzes the cyclization activity that produces IGP and AICAR from PRFAR using the ammonia provided by the HisH subunit. This chain is Imidazole glycerol phosphate synthase subunit HisF, found in Rhizorhabdus wittichii (strain DSM 6014 / CCUG 31198 / JCM 15750 / NBRC 105917 / EY 4224 / RW1) (Sphingomonas wittichii).